The sequence spans 565 residues: MKSPAPSRPQKMALIPACIFLCFAALSVQAEETSVTPQPPDILLGPLFNDVQNAKLFPDQKTFADAVPNSDPLMILADYRMQQNQSGFDLRHFVNVNFTLPKEGEKYVPPEGQSLREHIDGLWPVLTRSTENTEKWDSLLPLPKPYVVPGGRFREVYYWDSYFTMLGLAESGHWDKVADMVANFAHEIDTYGHIPNGNRSYYLSRSQPPFFALMVELLAQHEGDAALKQYLPQMQKEYAYWMDGVENLQAGQQEKRVVKLQDGTLLNRYWDDRDTPRPESWVEDIATAKSNPNRPATEIYRDLRSAAASGWDFSSRWMDNPQQLNTLRTTSIVPVDLNSLMFKMEKILARASKAAGDNAMANQYETLANARQKGIEKYLWNDQQGWYADYDLKSHKVRNQLTAAALFPLYVNAAAKDRASKMATATKTHLLQPGGLNTTSVKSGQQWDAPNGWAPLQWVATEGLQNYGQKEVAMDISWHFLTNVQHTYDREKKLVEKYDVSATGTGGGGGEYPLQDGFGWTNGVTLKMLDLICPKEQPCDNVPATRPLSESTTQPVKQKEAEPTP.

The first 30 residues, 1 to 30 (MKSPAPSRPQKMALIPACIFLCFAALSVQA), serve as a signal peptide directing secretion. Substrate contacts are provided by residues Arg152, 159 to 160 (WD), Asn196, 205 to 207 (RSQ), 277 to 279 (RPE), and Gly310. Active-site proton donor/acceptor residues include Asp312 and Glu496. Glu511 lines the substrate pocket. The segment at 539–565 (CDNVPATRPLSESTTQPVKQKEAEPTP) is disordered.

The protein belongs to the glycosyl hydrolase 37 family. As to quaternary structure, monomer.

Its subcellular location is the periplasm. The catalysed reaction is alpha,alpha-trehalose + H2O = alpha-D-glucose + beta-D-glucose. Functionally, provides the cells with the ability to utilize trehalose at high osmolarity by splitting it into glucose molecules that can subsequently be taken up by the phosphotransferase-mediated uptake system. This Escherichia coli O6:H1 (strain CFT073 / ATCC 700928 / UPEC) protein is Periplasmic trehalase.